A 229-amino-acid chain; its full sequence is Lipoprotein-releasing system ATP-binding protein LolD (229 aa).

The region spanning leucine 6–leucine 226 is the ABC transporter domain. Residue alanine 42–serine 49 participates in ATP binding.

It belongs to the ABC transporter superfamily. Lipoprotein translocase (TC 3.A.1.125) family. In terms of assembly, the complex is composed of two ATP-binding proteins (LolD) and two transmembrane proteins (LolC and LolE).

Its subcellular location is the cell inner membrane. In terms of biological role, part of the ABC transporter complex LolCDE involved in the translocation of mature outer membrane-directed lipoproteins, from the inner membrane to the periplasmic chaperone, LolA. Responsible for the formation of the LolA-lipoprotein complex in an ATP-dependent manner. The protein is Lipoprotein-releasing system ATP-binding protein LolD of Chelativorans sp. (strain BNC1).